The sequence spans 54 residues: MSKNKQDAGLSTSAGLVRYMDEDASKIKIAPEKVLGITISIMVLLFILNYGLLA.

The Cytoplasmic portion of the chain corresponds to 1 to 30 (MSKNKQDAGLSTSAGLVRYMDEDASKIKIA). Residues 31-52 (PEKVLGITISIMVLLFILNYGL) traverse the membrane as a helical segment. The Extracellular segment spans residues 53–54 (LA).

Belongs to the SEC61-beta family. In terms of assembly, component of the protein translocase complex. Heterotrimer consisting of alpha (SecY), beta (SecG) and gamma (SecE) subunits. Can form oligomers of the heterotrimer.

The protein localises to the cell membrane. Involved in protein export. The function of the beta subunit is unknown, but it may be involved in stabilization of the trimeric complex. The polypeptide is Preprotein translocase subunit SecG (Methanococcus aeolicus (strain ATCC BAA-1280 / DSM 17508 / OCM 812 / Nankai-3)).